A 467-amino-acid polypeptide reads, in one-letter code: UDP-N-acetylmuramate--L-alanine ligase (467 aa).

Position 114–120 (glycine 114–threonine 120) interacts with ATP.

This sequence belongs to the MurCDEF family.

It localises to the cytoplasm. It carries out the reaction UDP-N-acetyl-alpha-D-muramate + L-alanine + ATP = UDP-N-acetyl-alpha-D-muramoyl-L-alanine + ADP + phosphate + H(+). It functions in the pathway cell wall biogenesis; peptidoglycan biosynthesis. Cell wall formation. This chain is UDP-N-acetylmuramate--L-alanine ligase, found in Rhodopseudomonas palustris (strain ATCC BAA-98 / CGA009).